The primary structure comprises 247 residues: 2,3-bisphosphoglycerate-dependent phosphoglycerate mutase (247 aa).

Substrate is bound by residues 8 to 15 (RHGESTWN), 21 to 22 (TG), R60, 87 to 90 (ERHY), K98, 114 to 115 (RR), and 183 to 184 (GN). The active-site Tele-phosphohistidine intermediate is the H9. E87 functions as the Proton donor/acceptor in the catalytic mechanism.

The protein belongs to the phosphoglycerate mutase family. BPG-dependent PGAM subfamily. In terms of assembly, homodimer.

It carries out the reaction (2R)-2-phosphoglycerate = (2R)-3-phosphoglycerate. It participates in carbohydrate degradation; glycolysis; pyruvate from D-glyceraldehyde 3-phosphate: step 3/5. Catalyzes the interconversion of 2-phosphoglycerate and 3-phosphoglycerate. In Leptothrix cholodnii (strain ATCC 51168 / LMG 8142 / SP-6) (Leptothrix discophora (strain SP-6)), this protein is 2,3-bisphosphoglycerate-dependent phosphoglycerate mutase.